Reading from the N-terminus, the 252-residue chain is MWIGLISIFPDMFRAVMDYGVTGRAVKKGLLQVHCWNPRAFSHNRHQTVDDRPYGGGPGMLLMMQPLRDAIHEAKNHTETGVKVIYLSPQGRKLDQQGVYELAANKKLILICGRYKGIDERLITTEIDEEWSIGDYVLSGGELAAMILIDSMTRLIPGALSHESSAVEDSFAQGLLDCPHYTRPEVLYGIKVPPVLLSGHHANIRRWRLKQSLGRTWLRRPELLNNLYLTHEQVRLLKEFQYEYNNLIESQV.

S-adenosyl-L-methionine is bound by residues glycine 113 and 133–138 (IGDYVL).

This sequence belongs to the RNA methyltransferase TrmD family. As to quaternary structure, homodimer.

Its subcellular location is the cytoplasm. The enzyme catalyses guanosine(37) in tRNA + S-adenosyl-L-methionine = N(1)-methylguanosine(37) in tRNA + S-adenosyl-L-homocysteine + H(+). Functionally, specifically methylates guanosine-37 in various tRNAs. The polypeptide is tRNA (guanine-N(1)-)-methyltransferase (Baumannia cicadellinicola subsp. Homalodisca coagulata).